The following is a 325-amino-acid chain: Methionine import ATP-binding protein MetN 3 (325 aa).

Residues 2-239 enclose the ABC transporter domain; the sequence is IEVQQLCKVY…PQSALGRALL (238 aa). 36–43 contacts ATP; sequence GRSGAGKS.

This sequence belongs to the ABC transporter superfamily. Methionine importer (TC 3.A.1.24) family. The complex is composed of two ATP-binding proteins (MetN), two transmembrane proteins (MetI) and a solute-binding protein (MetQ).

The protein resides in the cell inner membrane. It catalyses the reaction L-methionine(out) + ATP + H2O = L-methionine(in) + ADP + phosphate + H(+). The enzyme catalyses D-methionine(out) + ATP + H2O = D-methionine(in) + ADP + phosphate + H(+). Part of the ABC transporter complex MetNIQ involved in methionine import. Responsible for energy coupling to the transport system. The chain is Methionine import ATP-binding protein MetN 3 from Pseudomonas fluorescens (strain ATCC BAA-477 / NRRL B-23932 / Pf-5).